The chain runs to 77 residues: Small ribosomal subunit protein uS17 (77 aa).

The protein belongs to the universal ribosomal protein uS17 family. In terms of assembly, part of the 30S ribosomal subunit.

One of the primary rRNA binding proteins, it binds specifically to the 5'-end of 16S ribosomal RNA. The chain is Small ribosomal subunit protein uS17 from Rickettsia rickettsii (strain Sheila Smith).